The following is a 341-amino-acid chain: Phosphate acyltransferase (341 aa).

It belongs to the PlsX family. As to quaternary structure, homodimer. Probably interacts with PlsY.

It is found in the cytoplasm. The enzyme catalyses a fatty acyl-[ACP] + phosphate = an acyl phosphate + holo-[ACP]. It functions in the pathway lipid metabolism; phospholipid metabolism. In terms of biological role, catalyzes the reversible formation of acyl-phosphate (acyl-PO(4)) from acyl-[acyl-carrier-protein] (acyl-ACP). This enzyme utilizes acyl-ACP as fatty acyl donor, but not acyl-CoA. In Chlorobaculum parvum (strain DSM 263 / NCIMB 8327) (Chlorobium vibrioforme subsp. thiosulfatophilum), this protein is Phosphate acyltransferase.